The chain runs to 213 residues: Octanoyltransferase (213 aa).

Residues 35 to 213 enclose the BPL/LPL catalytic domain; the sequence is DKHGDAVLLL…ERHLPTLVGA (179 aa). Substrate-binding positions include 73–80, 145–147, and 158–160; these read RGGKITWH, AIG, and GFS. Cysteine 176 serves as the catalytic Acyl-thioester intermediate.

It belongs to the LipB family.

It is found in the cytoplasm. It catalyses the reaction octanoyl-[ACP] + L-lysyl-[protein] = N(6)-octanoyl-L-lysyl-[protein] + holo-[ACP] + H(+). Its pathway is protein modification; protein lipoylation via endogenous pathway; protein N(6)-(lipoyl)lysine from octanoyl-[acyl-carrier-protein]: step 1/2. Catalyzes the transfer of endogenously produced octanoic acid from octanoyl-acyl-carrier-protein onto the lipoyl domains of lipoate-dependent enzymes. Lipoyl-ACP can also act as a substrate although octanoyl-ACP is likely to be the physiological substrate. The polypeptide is Octanoyltransferase (Salinispora arenicola (strain CNS-205)).